Consider the following 1193-residue polypeptide: DNA-directed RNA polymerase subunit beta (1193 aa).

Residues 1152 to 1161 (IEMRDLEDDE) show a composition bias toward acidic residues. Positions 1152 to 1193 (IEMRDLEDDEETKKADGLALSNDEDAADLAPVDLERDAVTKE) are disordered. The span at 1184–1193 (DLERDAVTKE) shows a compositional bias: basic and acidic residues.

The protein belongs to the RNA polymerase beta chain family. As to quaternary structure, the RNAP catalytic core consists of 2 alpha, 1 beta, 1 beta' and 1 omega subunit. When a sigma factor is associated with the core the holoenzyme is formed, which can initiate transcription.

It catalyses the reaction RNA(n) + a ribonucleoside 5'-triphosphate = RNA(n+1) + diphosphate. Its function is as follows. DNA-dependent RNA polymerase catalyzes the transcription of DNA into RNA using the four ribonucleoside triphosphates as substrates. The polypeptide is DNA-directed RNA polymerase subunit beta (Bacillus pumilus (strain SAFR-032)).